The sequence spans 238 residues: Small ribosomal subunit protein uS2 (238 aa).

It belongs to the universal ribosomal protein uS2 family.

The polypeptide is Small ribosomal subunit protein uS2 (Haemophilus ducreyi (strain 35000HP / ATCC 700724)).